A 158-amino-acid chain; its full sequence is Putative 8-oxo-dGTP diphosphatase YtkD (158 aa).

The Nudix hydrolase domain maps to 6 to 145; the sequence is DYYQNTVQLS…SFIMKDSVLP (140 aa). Residues 53-74 carry the Nudix box motif; that stretch reads GKVEPMECAEEAALREVKEETG. Positions 68 and 72 each coordinate Mg(2+).

This sequence belongs to the Nudix hydrolase family. Mg(2+) is required as a cofactor.

It catalyses the reaction 8-oxo-dGTP + H2O = 8-oxo-dGMP + diphosphate + H(+). With respect to regulation, not induced by oxidative damage (following treatment with paraquat or hydrogen peroxide). Not induced by mitomycin C. Not induced by sigma-B general stress inducers such as sodium chloride, ethanol or heat. In terms of biological role, involved in the GO system responsible for removing an oxidatively damaged form of guanine (7,8-dihydro-8-oxoguanine, 8-oxo-dGTP) from DNA and the nucleotide pool. 8-oxo-dGTP is inserted opposite dA and dC residues of template DNA with almost equal efficiency thus leading to A.T to G.C transversions. Functions, in conjunction with MutT, to protect vegetatively growing cells from DNA-damaging agents such as H(2)O(2) or t-BHP (t-butylhydroperoxide). The 2 proteins do not however protect spores. According to PubMed:15576788, phosphohydrolase that catalyzes the hydrolysis of all common nucleoside triphosphates as well as of the mutagenic analog 8-oxo-dGTP. The high catalytic efficiency on dGTP is in contrast to results from PubMed:14761999. According to PubMed:14761999, catalyzes the hydrolysis of 8-oxo-dGTP with a specific activity 413 times higher than that exhibited against dGTP. Preferentially catalyzes the hydrolysis of 8-oxo-dGTP and 8-oxo-GTP. According to PubMed:15576788, hydrolyzes nucleoside triphosphates in a stepwise fashion through the diphosphate to the monophosphate, releasing two molecules of inorganic orthophosphate. The polypeptide is Putative 8-oxo-dGTP diphosphatase YtkD (ytkD) (Bacillus subtilis (strain 168)).